The following is a 364-amino-acid chain: Putative apoptosis inhibitor ORF42 (364 aa).

Residues 24–89 form a BIR 1 repeat; the sequence is RLATFRGYEY…CREGVVSAPQ (66 aa). Residues 83-126 are disordered; the sequence is GVVSAPQQQPPPPPSTSIGAVGGDPRPEDMNVPERGWDPPMSKD. A compositionally biased stretch (basic and acidic residues) spans 117–126; the sequence is RGWDPPMSKD. 2 BIR repeats span residues 127–193 and 236–300; these read PKST…PLVV and RIAS…ANMA. Residues 315–350 form an RING-type zinc finger; the sequence is CVICLGAKADTILKPCLHYSLCYGCSTQVQKCPLCR.

In terms of biological role, may act as an apoptosis inhibitor. This Magallana gigas (Pacific oyster) protein is Putative apoptosis inhibitor ORF42.